A 44-amino-acid chain; its full sequence is Small hydrophobic protein (44 aa).

Residues 1 to 16 (MLPDPEDPESKKATRR) lie on the Intravirion side of the membrane. Residues 17–37 (AGNLIICFLFIFFLFVTFIVP) traverse the membrane as a helical; Signal-anchor for type II membrane protein segment. Over 38 to 44 (TLRHLLS) the chain is Virion surface.

Belongs to the rubulavirus small hydrophobic protein family.

It localises to the virion membrane. It is found in the host cell membrane. Its function is as follows. Inhibits TNF-alpha signaling and seems to block apoptosis in host infected cells. The polypeptide is Small hydrophobic protein (SH) (Parainfluenza virus 5 (strain W3) (PIV5)).